The following is a 395-amino-acid chain: Probable L-tyrosine/L-aspartate decarboxylase (395 aa).

Lysine 242 bears the N6-(pyridoxal phosphate)lysine mark.

This sequence belongs to the group II decarboxylase family. MfnA subfamily. The cofactor is pyridoxal 5'-phosphate.

The catalysed reaction is L-tyrosine + H(+) = tyramine + CO2. It carries out the reaction L-aspartate + H(+) = beta-alanine + CO2. It functions in the pathway cofactor biosynthesis; methanofuran biosynthesis. It participates in cofactor biosynthesis; coenzyme A biosynthesis. In terms of biological role, catalyzes the decarboxylation of L-tyrosine to produce tyramine for methanofuran biosynthesis. Can also catalyze the decarboxylation of L-aspartate to produce beta-alanine for coenzyme A (CoA) biosynthesis. In Methanosarcina acetivorans (strain ATCC 35395 / DSM 2834 / JCM 12185 / C2A), this protein is Probable L-tyrosine/L-aspartate decarboxylase.